Here is a 427-residue protein sequence, read N- to C-terminus: ATP synthase subunit beta (427 aa).

ATP is bound at residue 160–167; sequence GGAGVGKT.

Belongs to the ATPase alpha/beta chains family. In terms of assembly, F-type ATPases have 2 components, CF(1) - the catalytic core - and CF(0) - the membrane proton channel. CF(1) has five subunits: alpha(3), beta(3), gamma(1), delta(1), epsilon(1). CF(0) has three main subunits: a(1), b(2) and c(9-12). The alpha and beta chains form an alternating ring which encloses part of the gamma chain. CF(1) is attached to CF(0) by a central stalk formed by the gamma and epsilon chains, while a peripheral stalk is formed by the delta and b chains.

Its subcellular location is the cell membrane. It catalyses the reaction ATP + H2O + 4 H(+)(in) = ADP + phosphate + 5 H(+)(out). In terms of biological role, produces ATP from ADP in the presence of a proton gradient across the membrane. The catalytic sites are hosted primarily by the beta subunits. This chain is ATP synthase subunit beta, found in Peptococcus niger.